We begin with the raw amino-acid sequence, 662 residues long: Probable quinol oxidase subunit 1 (662 aa).

2 helical membrane passes run 14 to 34 and 56 to 76; these read WMII…IAVI and IGIM…IDAL. His102 is a binding site for Fe(II)-heme a. 8 consecutive transmembrane segments (helical) span residues 103–123, 140–160, 187–207, 228–248, 273–293, 311–331, 336–356, and 376–396; these read GVIM…NVVI, VSFW…IVGG, IAIQ…FVTI, FITT…LALM, FFWV…FGMY, MIWA…HHFF, GALI…PTGV, and MLFS…GVML. His279, Tyr283, His328, and His329 together coordinate Cu cation. Residues 279 to 283 constitute a cross-link (1'-histidyl-3'-tyrosine (His-Tyr)); the sequence is HPEVY. Residue His414 participates in heme a3 binding. 5 consecutive transmembrane segments (helical) span residues 415-435, 451-471, 492-512, 587-604, and 608-627; these read FHYT…IFWY, CFWF…ILGL, FIST…VASI, PVGF…FFLI, and IVPA…WRSF. His416 lines the Fe(II)-heme a pocket.

Belongs to the heme-copper respiratory oxidase family. It depends on Cu cation as a cofactor. Ferriheme a is required as a cofactor. Heme A3. serves as cofactor.

It localises to the cell membrane. The catalysed reaction is 2 a quinol + O2 = 2 a quinone + 2 H2O. It participates in energy metabolism; oxidative phosphorylation. Catalyzes quinol oxidation with the concomitant reduction of oxygen to water. This chain is Probable quinol oxidase subunit 1 (qoxB), found in Staphylococcus epidermidis (strain ATCC 35984 / DSM 28319 / BCRC 17069 / CCUG 31568 / BM 3577 / RP62A).